A 1606-amino-acid polypeptide reads, in one-letter code: Pentafunctional AROM polypeptide (1606 aa).

The segment at 1–390 (MANADVLKVS…YEPKATVVPD (390 aa)) is 3-dehydroquinate synthase. NAD(+) contacts are provided by residues 45 to 47 (DTN), 85 to 88 (ETSK), 116 to 118 (GGV), and Asp121. Arg132 contributes to the 7-phospho-2-dehydro-3-deoxy-D-arabino-heptonate binding site. 141 to 142 (TT) provides a ligand contact to NAD(+). Positions 148 and 154 each coordinate 7-phospho-2-dehydro-3-deoxy-D-arabino-heptonate. Lys163 is a binding site for NAD(+). Asn164 contributes to the 7-phospho-2-dehydro-3-deoxy-D-arabino-heptonate binding site. Residues 181–184 (FLET) and Asn192 each bind NAD(+). Zn(2+) is bound at residue Glu196. Residues 196-199 (EVVK) and Lys256 contribute to the 7-phospho-2-dehydro-3-deoxy-D-arabino-heptonate site. Glu266 serves as the catalytic Proton acceptor; for 3-dehydroquinate synthase activity. Residues 270–274 (RNLVN) and His277 contribute to the 7-phospho-2-dehydro-3-deoxy-D-arabino-heptonate site. His277 contacts Zn(2+). His281 functions as the Proton acceptor; for 3-dehydroquinate synthase activity in the catalytic mechanism. Positions 293 and 362 each coordinate 7-phospho-2-dehydro-3-deoxy-D-arabino-heptonate. His293 provides a ligand contact to Zn(2+). The tract at residues 403–850 (VIPGVPRHHP…WDDLENKIGL (448 aa)) is EPSP synthase. The active-site For EPSP synthase activity is Cys832. The shikimate kinase stretch occupies residues 875-1070 (AASIILIGMR…TSGRRSYFLC (196 aa)). Residue 882–889 (GMRGTGKT) coordinates ATP. The segment at 1071–1296 (LTYPDVTQSF…AAPGQLSFKQ (226 aa)) is 3-dehydroquinase. His1198 acts as the Proton acceptor; for 3-dehydroquinate dehydratase activity in catalysis. Lys1226 acts as the Schiff-base intermediate with substrate; for 3-dehydroquinate dehydratase activity in catalysis. Positions 1309–1606 (AQRFYLFGTP…QFVFEEECES (298 aa)) are shikimate dehydrogenase.

It in the N-terminal section; belongs to the sugar phosphate cyclases superfamily. Dehydroquinate synthase family. In the 2nd section; belongs to the EPSP synthase family. This sequence in the 3rd section; belongs to the shikimate kinase family. The protein in the 4th section; belongs to the type-I 3-dehydroquinase family. It in the C-terminal section; belongs to the shikimate dehydrogenase family. As to quaternary structure, homodimer. Requires Zn(2+) as cofactor.

The protein resides in the cytoplasm. The catalysed reaction is 7-phospho-2-dehydro-3-deoxy-D-arabino-heptonate = 3-dehydroquinate + phosphate. The enzyme catalyses 3-dehydroquinate = 3-dehydroshikimate + H2O. It carries out the reaction shikimate + NADP(+) = 3-dehydroshikimate + NADPH + H(+). It catalyses the reaction shikimate + ATP = 3-phosphoshikimate + ADP + H(+). The catalysed reaction is 3-phosphoshikimate + phosphoenolpyruvate = 5-O-(1-carboxyvinyl)-3-phosphoshikimate + phosphate. It participates in metabolic intermediate biosynthesis; chorismate biosynthesis; chorismate from D-erythrose 4-phosphate and phosphoenolpyruvate: step 2/7. It functions in the pathway metabolic intermediate biosynthesis; chorismate biosynthesis; chorismate from D-erythrose 4-phosphate and phosphoenolpyruvate: step 3/7. The protein operates within metabolic intermediate biosynthesis; chorismate biosynthesis; chorismate from D-erythrose 4-phosphate and phosphoenolpyruvate: step 4/7. Its pathway is metabolic intermediate biosynthesis; chorismate biosynthesis; chorismate from D-erythrose 4-phosphate and phosphoenolpyruvate: step 5/7. It participates in metabolic intermediate biosynthesis; chorismate biosynthesis; chorismate from D-erythrose 4-phosphate and phosphoenolpyruvate: step 6/7. The AROM polypeptide catalyzes 5 consecutive enzymatic reactions in prechorismate polyaromatic amino acid biosynthesis. This is Pentafunctional AROM polypeptide from Laccaria bicolor (strain S238N-H82 / ATCC MYA-4686) (Bicoloured deceiver).